Reading from the N-terminus, the 138-residue chain is MLQPARTKFRKQHKGRNTGIATRGAKVSFGEFGLKAIGRGRLTSRQIEAARRAMTRHIKRGGRIWIRVFPDKPVSQKPAEVRMGKGKGNPEYYVAEIQPGKMLYEMDGVDESLAREAFRLAAAKLPMQTTFVIRHLGS.

This sequence belongs to the universal ribosomal protein uL16 family. Part of the 50S ribosomal subunit.

Binds 23S rRNA and is also seen to make contacts with the A and possibly P site tRNAs. The sequence is that of Large ribosomal subunit protein uL16 from Nitrosomonas europaea (strain ATCC 19718 / CIP 103999 / KCTC 2705 / NBRC 14298).